The sequence spans 262 residues: Ribosomal RNA small subunit methyltransferase A (262 aa).

H16, L18, G43, E64, D89, and N109 together coordinate S-adenosyl-L-methionine.

The protein belongs to the class I-like SAM-binding methyltransferase superfamily. rRNA adenine N(6)-methyltransferase family. RsmA subfamily.

The protein resides in the cytoplasm. It catalyses the reaction adenosine(1518)/adenosine(1519) in 16S rRNA + 4 S-adenosyl-L-methionine = N(6)-dimethyladenosine(1518)/N(6)-dimethyladenosine(1519) in 16S rRNA + 4 S-adenosyl-L-homocysteine + 4 H(+). Functionally, specifically dimethylates two adjacent adenosines (A1518 and A1519) in the loop of a conserved hairpin near the 3'-end of 16S rRNA in the 30S particle. May play a critical role in biogenesis of 30S subunits. The polypeptide is Ribosomal RNA small subunit methyltransferase A (Xanthomonas euvesicatoria pv. vesicatoria (strain 85-10) (Xanthomonas campestris pv. vesicatoria)).